The sequence spans 396 residues: ATP-dependent RNA helicase eIF4A (396 aa).

The Q motif motif lies at 23 to 51 (DSFDEMNLKSELLRGIYAYGFERPSAIQQ). Residues 54–224 (IMPVIKGHDV…TKFMRDPVRI (171 aa)) enclose the Helicase ATP-binding domain. 67 to 74 (AQSGTGKT) contributes to the ATP binding site. Positions 172 to 175 (DEAD) match the DEAD box motif. The 162-residue stretch at 235 to 396 (GIKQFYIAVE…EMPMNVADLI (162 aa)) folds into the Helicase C-terminal domain.

The protein belongs to the DEAD box helicase family. eIF4A subfamily. In terms of assembly, component of the eIF4F complex, which composition varies with external and internal environmental conditions. It is composed of at least eIF4A, eIF4E and eIF4G.

It is found in the cytoplasm. It carries out the reaction ATP + H2O = ADP + phosphate + H(+). In terms of biological role, ATP-dependent RNA helicase which is a subunit of the eIF4F complex involved in cap recognition and is required for mRNA binding to ribosome. In the current model of translation initiation, eIF4A unwinds RNA secondary structures in the 5'-UTR of mRNAs which is necessary to allow efficient binding of the small ribosomal subunit, and subsequent scanning for the initiator codon. This is ATP-dependent RNA helicase eIF4A (TIF1) from Pyricularia oryzae (strain 70-15 / ATCC MYA-4617 / FGSC 8958) (Rice blast fungus).